The primary structure comprises 506 residues: GMP synthase [glutamine-hydrolyzing] (506 aa).

The 186-residue stretch at 3–188 (GFVILDFGSQ…AQGMCKAPAD (186 aa)) folds into the Glutamine amidotransferase type-1 domain. Residue cysteine 80 is the Nucleophile of the active site. Catalysis depends on residues histidine 162 and glutamate 164. Residues 189-381 (WDAPHIKDIL…LGLPKEMLWR (193 aa)) form the GMPS ATP-PPase domain. 217–223 (SGGVDST) contributes to the ATP binding site.

In terms of assembly, homodimer.

The enzyme catalyses XMP + L-glutamine + ATP + H2O = GMP + L-glutamate + AMP + diphosphate + 2 H(+). It participates in purine metabolism; GMP biosynthesis; GMP from XMP (L-Gln route): step 1/1. In terms of biological role, catalyzes the synthesis of GMP from XMP. The chain is GMP synthase [glutamine-hydrolyzing] from Bdellovibrio bacteriovorus (strain ATCC 15356 / DSM 50701 / NCIMB 9529 / HD100).